Reading from the N-terminus, the 385-residue chain is AA13 family lytic polysaccharide monooxygenase aasA (385 aa).

The first 18 residues, 1 to 18 (MKSLLALVAGNLVTAVSG), serve as a signal peptide directing secretion. His19 is a binding site for Cu(2+). His19 is subject to Methylhistidine. An N-terminal catalytic module region spans residues 19 to 248 (HGYLTVPASR…AQVYLHCADI (230 aa)). Cystine bridges form between Cys40–Cys43, Cys66–Cys245, Cys102–Cys203, Cys118–Cys145, Cys153–Cys161, Cys167–Cys173, and Cys181–Cys192. His109 is a binding site for Cu(2+). N-linked (GlcNAc...) asparagine glycosylation occurs at Asn120. Tyr242 provides a ligand contact to Cu(2+). The segment at 254 to 276 (SGSSPSPTSTTSTATSTTTPSST) is disordered. Residues 256-276 (SSPSPTSTTSTATSTTTPSST) show a composition bias toward low complexity. The region spanning 278 to 385 (CASAISIPVT…TTATESGAWR (108 aa)) is the CBM20 domain. Asn364 carries N-linked (GlcNAc...) asparagine glycosylation.

It belongs to the polysaccharide monooxygenase AA13 family. Cu(2+) serves as cofactor. Post-translationally, the catalytically essential N-terminal histidine His-19 is post-translationally modified by methylation to prevent protonation of the histidine side chain, and protect the critical active site of the enzyme from oxidative damage.

It localises to the secreted. The enzyme catalyses starch + reduced acceptor + O2 = D-glucono-1,5-lactone-terminated malto-oligosaccharides + short-chain malto-oligosaccharides + acceptor + H2O.. Functionally, starch-active polysaccharide monooxygenase that oxidizes the C1 position of starch substrates, but not in cellulose, chitin, polygalacturonan or esterified pectin, nor with Arabidopsis stem cell walls. Catalysis by LPMOs requires the reduction of the active-site copper from Cu(II) to Cu(I) by a reducing agent and H(2)O(2) or O(2) as a cosubstrate. The sequence is that of AA13 family lytic polysaccharide monooxygenase aasA from Emericella nidulans (strain FGSC A4 / ATCC 38163 / CBS 112.46 / NRRL 194 / M139) (Aspergillus nidulans).